The primary structure comprises 213 residues: 3,4-dihydroxy-2-butanone 4-phosphate synthase (213 aa).

D-ribulose 5-phosphate contacts are provided by residues 37 to 38, Asp42, 150 to 154, and Glu174; these read RE and RAGHT. Glu38 lines the Mg(2+) pocket. His153 serves as a coordination point for Mg(2+).

This sequence belongs to the DHBP synthase family. In terms of assembly, homodimer. Mg(2+) is required as a cofactor. The cofactor is Mn(2+).

It catalyses the reaction D-ribulose 5-phosphate = (2S)-2-hydroxy-3-oxobutyl phosphate + formate + H(+). It functions in the pathway cofactor biosynthesis; riboflavin biosynthesis; 2-hydroxy-3-oxobutyl phosphate from D-ribulose 5-phosphate: step 1/1. Catalyzes the conversion of D-ribulose 5-phosphate to formate and 3,4-dihydroxy-2-butanone 4-phosphate. The protein is 3,4-dihydroxy-2-butanone 4-phosphate synthase of Wigglesworthia glossinidia brevipalpis.